The sequence spans 128 residues: Cytochrome c-type biogenesis protein CcmE (128 aa).

At M1 to R8 the chain is on the cytoplasmic side. The chain crosses the membrane as a helical; Signal-anchor for type II membrane protein span at residues L9–N29. Over L30–R128 the chain is Periplasmic. H120 and Y124 together coordinate heme.

The protein belongs to the CcmE/CycJ family.

It is found in the cell inner membrane. Its function is as follows. Heme chaperone required for the biogenesis of c-type cytochromes. Transiently binds heme delivered by CcmC and transfers the heme to apo-cytochromes in a process facilitated by CcmF and CcmH. The polypeptide is Cytochrome c-type biogenesis protein CcmE (Rickettsia canadensis (strain McKiel)).